The primary structure comprises 271 residues: Putative phosphoenolpyruvate synthase regulatory protein (271 aa).

ADP is bound at residue 151–158 (GVSRSGKT).

Belongs to the pyruvate, phosphate/water dikinase regulatory protein family. PSRP subfamily.

It catalyses the reaction [pyruvate, water dikinase] + ADP = [pyruvate, water dikinase]-phosphate + AMP + H(+). It carries out the reaction [pyruvate, water dikinase]-phosphate + phosphate + H(+) = [pyruvate, water dikinase] + diphosphate. Its function is as follows. Bifunctional serine/threonine kinase and phosphorylase involved in the regulation of the phosphoenolpyruvate synthase (PEPS) by catalyzing its phosphorylation/dephosphorylation. This is Putative phosphoenolpyruvate synthase regulatory protein from Burkholderia lata (strain ATCC 17760 / DSM 23089 / LMG 22485 / NCIMB 9086 / R18194 / 383).